A 779-amino-acid polypeptide reads, in one-letter code: Phosphoribosylformylglycinamidine synthase subunit PurL (779 aa).

Histidine 52 is an active-site residue. ATP-binding residues include tyrosine 55 and lysine 94. Glutamate 96 provides a ligand contact to Mg(2+). Residues 97-100 and arginine 119 contribute to the substrate site; that span reads SHNH. Histidine 98 acts as the Proton acceptor in catalysis. Residue aspartate 120 participates in Mg(2+) binding. A substrate-binding site is contributed by glutamine 243. A Mg(2+)-binding site is contributed by aspartate 271. Residue 315 to 317 participates in substrate binding; sequence ESQ. The ATP site is built by asparagine 523 and glycine 560. Mg(2+) is bound at residue asparagine 561. Serine 563 provides a ligand contact to substrate.

The protein belongs to the FGAMS family. Monomer. Part of the FGAM synthase complex composed of 1 PurL, 1 PurQ and 2 PurS subunits.

It is found in the cytoplasm. It catalyses the reaction N(2)-formyl-N(1)-(5-phospho-beta-D-ribosyl)glycinamide + L-glutamine + ATP + H2O = 2-formamido-N(1)-(5-O-phospho-beta-D-ribosyl)acetamidine + L-glutamate + ADP + phosphate + H(+). It participates in purine metabolism; IMP biosynthesis via de novo pathway; 5-amino-1-(5-phospho-D-ribosyl)imidazole from N(2)-formyl-N(1)-(5-phospho-D-ribosyl)glycinamide: step 1/2. Its function is as follows. Part of the phosphoribosylformylglycinamidine synthase complex involved in the purines biosynthetic pathway. Catalyzes the ATP-dependent conversion of formylglycinamide ribonucleotide (FGAR) and glutamine to yield formylglycinamidine ribonucleotide (FGAM) and glutamate. The FGAM synthase complex is composed of three subunits. PurQ produces an ammonia molecule by converting glutamine to glutamate. PurL transfers the ammonia molecule to FGAR to form FGAM in an ATP-dependent manner. PurS interacts with PurQ and PurL and is thought to assist in the transfer of the ammonia molecule from PurQ to PurL. The sequence is that of Phosphoribosylformylglycinamidine synthase subunit PurL from Prochlorococcus marinus (strain MIT 9301).